The following is a 208-amino-acid chain: Cytochrome c biogenesis ATP-binding export protein CcmA (208 aa).

Residues 3-206 form the ABC transporter domain; sequence LSGKDLAAHR…LEKFVPSQER (204 aa). 35 to 42 is an ATP binding site; the sequence is GPNGIGKS.

The protein belongs to the ABC transporter superfamily. CcmA exporter (TC 3.A.1.107) family. In terms of assembly, the complex is composed of two ATP-binding proteins (CcmA) and two transmembrane proteins (CcmB).

It is found in the cell inner membrane. It catalyses the reaction heme b(in) + ATP + H2O = heme b(out) + ADP + phosphate + H(+). Its function is as follows. Part of the ABC transporter complex CcmAB involved in the biogenesis of c-type cytochromes; once thought to export heme, this seems not to be the case, but its exact role is uncertain. Responsible for energy coupling to the transport system. In Bartonella quintana (strain Toulouse) (Rochalimaea quintana), this protein is Cytochrome c biogenesis ATP-binding export protein CcmA.